The chain runs to 118 residues: UPF0329 protein ECU03_0030/ECU05_0040/ECU06_0010/ECU06_1710/ECU11_0010 (118 aa).

This sequence belongs to the UPF0329 family.

This Encephalitozoon cuniculi (strain GB-M1) (Microsporidian parasite) protein is UPF0329 protein ECU03_0030/ECU05_0040/ECU06_0010/ECU06_1710/ECU11_0010.